A 426-amino-acid polypeptide reads, in one-letter code: Serine--tRNA ligase (426 aa).

Residues 37-63 form a disordered region; it reads RKSVQTRTEQLQAERNARSKSIGQAKA. An L-serine-binding site is contributed by 233–235; the sequence is TAE. 264–266 provides a ligand contact to ATP; the sequence is RSE. Glu287 serves as a coordination point for L-serine. 351 to 354 is a binding site for ATP; it reads EISS. Ser387 is a binding site for L-serine.

This sequence belongs to the class-II aminoacyl-tRNA synthetase family. Type-1 seryl-tRNA synthetase subfamily. In terms of assembly, homodimer. The tRNA molecule binds across the dimer.

It is found in the cytoplasm. The catalysed reaction is tRNA(Ser) + L-serine + ATP = L-seryl-tRNA(Ser) + AMP + diphosphate + H(+). It catalyses the reaction tRNA(Sec) + L-serine + ATP = L-seryl-tRNA(Sec) + AMP + diphosphate + H(+). Its pathway is aminoacyl-tRNA biosynthesis; selenocysteinyl-tRNA(Sec) biosynthesis; L-seryl-tRNA(Sec) from L-serine and tRNA(Sec): step 1/1. Its function is as follows. Catalyzes the attachment of serine to tRNA(Ser). Is also able to aminoacylate tRNA(Sec) with serine, to form the misacylated tRNA L-seryl-tRNA(Sec), which will be further converted into selenocysteinyl-tRNA(Sec). The polypeptide is Serine--tRNA ligase (Pseudomonas entomophila (strain L48)).